Consider the following 407-residue polypeptide: Accessory Sec system protein translocase subunit SecY2 (407 aa).

10 helical membrane passes run 22-42, 68-88, 108-128, 136-156, 169-189, 191-211, 245-265, 280-300, 343-363, and 366-386; these read IAFT…TIVD, LNVF…ISLI, EKFL…NQFV, FTEL…MWLA, PIVL…IVSI, ILML…LLLT, ISIM…NLIF, FGHY…GYLL, WFGT…SLLV, and LSEY…AMNI.

Belongs to the SecY/SEC61-alpha family. SecY2 subfamily. As to quaternary structure, component of the accessory SecA2/SecY2 protein translocase complex required to export cell wall proteins. May form heterotrimers with SecE and SecG subunits.

The protein resides in the cell membrane. Its function is as follows. Part of the accessory SecA2/SecY2 system specifically required for export of possible cell wall proteins. The central subunit of a protein translocation channel. The protein is Accessory Sec system protein translocase subunit SecY2 of Staphylococcus pseudintermedius (strain ED99).